The chain runs to 202 residues: Holliday junction branch migration complex subunit RuvA (202 aa).

The domain I stretch occupies residues 1 to 62 (MIGYLRGRLH…EDAMELYGFT (62 aa)). Positions 63–141 (RPEELHLFTL…KSGLVDGTET (79 aa)) are domain II. Positions 141–145 (TEAIP) are flexible linker. The tract at residues 146–202 (AGGGDNDEALAALLALGYSREEIGPILARVRQELGNAAPTTAVLQAVLKTFGRGGGD) is domain III.

The protein belongs to the RuvA family. Homotetramer. Forms an RuvA(8)-RuvB(12)-Holliday junction (HJ) complex. HJ DNA is sandwiched between 2 RuvA tetramers; dsDNA enters through RuvA and exits via RuvB. An RuvB hexamer assembles on each DNA strand where it exits the tetramer. Each RuvB hexamer is contacted by two RuvA subunits (via domain III) on 2 adjacent RuvB subunits; this complex drives branch migration. In the full resolvosome a probable DNA-RuvA(4)-RuvB(12)-RuvC(2) complex forms which resolves the HJ.

The protein localises to the cytoplasm. Its function is as follows. The RuvA-RuvB-RuvC complex processes Holliday junction (HJ) DNA during genetic recombination and DNA repair, while the RuvA-RuvB complex plays an important role in the rescue of blocked DNA replication forks via replication fork reversal (RFR). RuvA specifically binds to HJ cruciform DNA, conferring on it an open structure. The RuvB hexamer acts as an ATP-dependent pump, pulling dsDNA into and through the RuvAB complex. HJ branch migration allows RuvC to scan DNA until it finds its consensus sequence, where it cleaves and resolves the cruciform DNA. The protein is Holliday junction branch migration complex subunit RuvA of Moorella thermoacetica (strain ATCC 39073 / JCM 9320).